Reading from the N-terminus, the 620-residue chain is Glutathione-regulated potassium-efflux system protein KefC (620 aa).

The next 12 helical transmembrane spans lie at 4 to 24 (HTLM…PIAV), 26 to 46 (LGLG…PWGL), 54 to 74 (SILH…GLEL), 90 to 110 (GALQ…FLGL), 114 to 134 (VAEL…MQAM), 149 to 169 (FAVL…IPLL), 178 to 198 (LGAF…VVLL), 218 to 238 (VFSA…EEVG), 270 to 290 (GLLL…GTLV), 294 to 314 (LRIL…LWLI), 327 to 347 (WFAV…GAAQ), and 359 to 379 (ALTL…VLLT). The 120-residue stretch at 399-518 (QPRVIVAGFG…AGVAMPERET (120 aa)) folds into the RCK N-terminal domain. Positions 599 to 620 (QGTAEGKHTGDIADEPQVKPST) are disordered.

The protein belongs to the monovalent cation:proton antiporter 2 (CPA2) transporter (TC 2.A.37) family. KefC subfamily. Homodimer. Interacts with the regulatory subunit KefF.

The protein localises to the cell inner membrane. Pore-forming subunit of a potassium efflux system that confers protection against electrophiles. Catalyzes K(+)/H(+) antiport. The polypeptide is Glutathione-regulated potassium-efflux system protein KefC (Salmonella arizonae (strain ATCC BAA-731 / CDC346-86 / RSK2980)).